The following is a 203-amino-acid chain: Thymidylate kinase (203 aa).

Position 10–17 (10–17 (GIDGAGKS)) interacts with ATP.

The protein belongs to the thymidylate kinase family.

The catalysed reaction is dTMP + ATP = dTDP + ADP. Phosphorylation of dTMP to form dTDP in both de novo and salvage pathways of dTTP synthesis. In Cupriavidus pinatubonensis (strain JMP 134 / LMG 1197) (Cupriavidus necator (strain JMP 134)), this protein is Thymidylate kinase.